The sequence spans 129 residues: MSTTSEIIEKLKTLTLLEAAELVSQIEETFGVDASAPVGGGMVMAVGDAGGAAEEVAEKTTFDVVVEDIPSDKRVAVLKVIRKLTSLGLAEVKAFTNSLPGTLQEGISKEEAETAKTELEAAGAVVKIA.

Belongs to the bacterial ribosomal protein bL12 family. Homodimer. Part of the ribosomal stalk of the 50S ribosomal subunit. Forms a multimeric L10(L12)X complex, where L10 forms an elongated spine to which 2 to 4 L12 dimers bind in a sequential fashion. Binds GTP-bound translation factors.

The protein localises to the plastid. It localises to the chloroplast. In terms of biological role, forms part of the ribosomal stalk which helps the ribosome interact with GTP-bound translation factors. Is thus essential for accurate translation. In Oltmannsiellopsis viridis (Marine flagellate), this protein is Large ribosomal subunit protein bL12c.